Reading from the N-terminus, the 73-residue chain is uncharacterized protein (73 aa).

This is an uncharacterized protein from Escherichia coli (strain K12).